A 166-amino-acid chain; its full sequence is Ribosome-binding factor A (166 aa).

The interval 122–166 (HVADETDVEDSTDHEDDVTNSEDETKHVDIDTDSEEGTNTDGKAQ) is disordered. Positions 126-143 (ETDVEDSTDHEDDVTNSE) are enriched in acidic residues.

Belongs to the RbfA family. In terms of assembly, monomer. Binds 30S ribosomal subunits, but not 50S ribosomal subunits or 70S ribosomes.

The protein resides in the cytoplasm. One of several proteins that assist in the late maturation steps of the functional core of the 30S ribosomal subunit. Associates with free 30S ribosomal subunits (but not with 30S subunits that are part of 70S ribosomes or polysomes). Required for efficient processing of 16S rRNA. May interact with the 5'-terminal helix region of 16S rRNA. The sequence is that of Ribosome-binding factor A from Pseudoalteromonas translucida (strain TAC 125).